We begin with the raw amino-acid sequence, 328 residues long: DNA repair and recombination protein RadA (328 aa).

Gly-118–Thr-125 lines the ATP pocket.

It belongs to the eukaryotic RecA-like protein family.

In terms of biological role, involved in DNA repair and in homologous recombination. Binds and assemble on single-stranded DNA to form a nucleoprotein filament. Hydrolyzes ATP in a ssDNA-dependent manner and promotes DNA strand exchange between homologous DNA molecules. The polypeptide is DNA repair and recombination protein RadA (Desulfurococcus amylolyticus (strain DSM 18924 / JCM 16383 / VKM B-2413 / 1221n) (Desulfurococcus kamchatkensis)).